The sequence spans 143 residues: Mediator of RNA polymerase II transcription subunit 21 (143 aa).

Residues 53–130 (KEFEKNIDEL…KVRTLTQDFT (78 aa)) adopt a coiled-coil conformation.

It belongs to the Mediator complex subunit 21 family. In terms of assembly, component of the Mediator complex.

It localises to the nucleus. Its function is as follows. Component of the Mediator complex, a coactivator involved in the regulated transcription of nearly all RNA polymerase II-dependent genes. Mediator functions as a bridge to convey information from gene-specific regulatory proteins to the basal RNA polymerase II transcription machinery. Mediator is recruited to promoters by direct interactions with regulatory proteins and serves as a scaffold for the assembly of a functional preinitiation complex with RNA polymerase II and the general transcription factors. The protein is Mediator of RNA polymerase II transcription subunit 21 (SRB7) of Kluyveromyces lactis (strain ATCC 8585 / CBS 2359 / DSM 70799 / NBRC 1267 / NRRL Y-1140 / WM37) (Yeast).